Consider the following 459-residue polypeptide: ATP-dependent protease ATPase subunit HslU (459 aa).

ATP is bound by residues valine 26, 68–73 (GVGKTE), aspartate 271, glutamate 337, and arginine 409.

The protein belongs to the ClpX chaperone family. HslU subfamily. A double ring-shaped homohexamer of HslV is capped on each side by a ring-shaped HslU homohexamer. The assembly of the HslU/HslV complex is dependent on binding of ATP.

The protein localises to the cytoplasm. Functionally, ATPase subunit of a proteasome-like degradation complex; this subunit has chaperone activity. The binding of ATP and its subsequent hydrolysis by HslU are essential for unfolding of protein substrates subsequently hydrolyzed by HslV. HslU recognizes the N-terminal part of its protein substrates and unfolds these before they are guided to HslV for hydrolysis. This chain is ATP-dependent protease ATPase subunit HslU, found in Xylella fastidiosa (strain M23).